A 210-amino-acid polypeptide reads, in one-letter code: Thiamine-phosphate synthase (210 aa).

4-amino-2-methyl-5-(diphosphooxymethyl)pyrimidine contacts are provided by residues 38–42 (QFREK) and Asn70. Mg(2+)-binding residues include Asp71 and Asp90. Ser107 serves as a coordination point for 4-amino-2-methyl-5-(diphosphooxymethyl)pyrimidine. Residue 132–134 (TKT) coordinates 2-[(2R,5Z)-2-carboxy-4-methylthiazol-5(2H)-ylidene]ethyl phosphate. Position 135 (Lys135) interacts with 4-amino-2-methyl-5-(diphosphooxymethyl)pyrimidine. A 2-[(2R,5Z)-2-carboxy-4-methylthiazol-5(2H)-ylidene]ethyl phosphate-binding site is contributed by 183–184 (IS).

It belongs to the thiamine-phosphate synthase family. Mg(2+) serves as cofactor.

It catalyses the reaction 2-[(2R,5Z)-2-carboxy-4-methylthiazol-5(2H)-ylidene]ethyl phosphate + 4-amino-2-methyl-5-(diphosphooxymethyl)pyrimidine + 2 H(+) = thiamine phosphate + CO2 + diphosphate. The enzyme catalyses 2-(2-carboxy-4-methylthiazol-5-yl)ethyl phosphate + 4-amino-2-methyl-5-(diphosphooxymethyl)pyrimidine + 2 H(+) = thiamine phosphate + CO2 + diphosphate. The catalysed reaction is 4-methyl-5-(2-phosphooxyethyl)-thiazole + 4-amino-2-methyl-5-(diphosphooxymethyl)pyrimidine + H(+) = thiamine phosphate + diphosphate. Its pathway is cofactor biosynthesis; thiamine diphosphate biosynthesis; thiamine phosphate from 4-amino-2-methyl-5-diphosphomethylpyrimidine and 4-methyl-5-(2-phosphoethyl)-thiazole: step 1/1. Functionally, condenses 4-methyl-5-(beta-hydroxyethyl)thiazole monophosphate (THZ-P) and 2-methyl-4-amino-5-hydroxymethyl pyrimidine pyrophosphate (HMP-PP) to form thiamine monophosphate (TMP). In Archaeoglobus fulgidus (strain ATCC 49558 / DSM 4304 / JCM 9628 / NBRC 100126 / VC-16), this protein is Thiamine-phosphate synthase.